The primary structure comprises 662 residues: MKDLRLQGPYRKYIPYNIFQQCGIGHLKTLDYIFAFLIVITNFTLIWKSHSSSFWNRPWDNNSEQELSQLIQFYLDKAFYIHELPPFTIQFYSIIRRLKIAENLRYVSLFLNSSTLGFLFLITRRINCSRLISATGLLILSNWETFRNEGTIISFDSLEWCLFSVVIYSFISISIAKLGTTNWFANVITLSISLGLAISSKFIGIVTWAFVILSFVRQFDRLISDVKVTTIQIIKFVILCLLFVLIIPGSIFIISYSNLLSNFKTDTPQFSKYMSTYFKSYLRGPQVQPSRLYYGSTITLRHLDSMVGYLASHDISYPSDVDEQLVALSFEEFAADNEWLIEHPTLNLSFSEVYHADQLIPVEFGQSIKLRHKSTGKLLRASTAKPPISEQDYDFQISCTKDSNYEGGMDERWDVLLIKDEINNDKKDNADDKYIKPLQSEIRFYNNGQRCGLLGHDLRLPEWGRFEQEVLCMEYPVIPRTTFLIDSVQLPVDFQVPMIEYYIGKISSSAEFNHTLSWSQFLYLFKEYIFKQYKYNYYIKYGKNKVTFEDAFAVEKWPITLDTDSPVWFNFAWYGSLLSMIIFMCVQCKRMISWNPWTTAEPSFSIKWEVYNEFGWECIVGWFLHFYIFTMSPHFNLGKKLYFQSFFFSVLCLLESLDCLAK.

Topologically, residues 1-26 are lumenal; sequence MKDLRLQGPYRKYIPYNIFQQCGIGH. Residues 27-47 traverse the membrane as a helical segment; the sequence is LKTLDYIFAFLIVITNFTLIW. The Cytoplasmic segment spans residues 48–159; sequence KSHSSSFWNR…GTIISFDSLE (112 aa). A helical transmembrane segment spans residues 160-180; that stretch reads WCLFSVVIYSFISISIAKLGT. The Lumenal portion of the chain corresponds to 181 to 195; that stretch reads TNWFANVITLSISLG. Residues 196 to 216 traverse the membrane as a helical segment; it reads LAISSKFIGIVTWAFVILSFV. Residues 217–235 are Cytoplasmic-facing; it reads RQFDRLISDVKVTTIQIIK. A helical transmembrane segment spans residues 236-256; sequence FVILCLLFVLIIPGSIFIISY. The Lumenal portion of the chain corresponds to 257-482; it reads SNLLSNFKTD…MEYPVIPRTT (226 aa). An MIR 1 domain is found at 289–344; it reads PSRLYYGSTITLRHLDSMVGYLASHDISYPSDVDEQLVALSFEEFAADNEWLIEHP. The N-linked (GlcNAc...) asparagine glycan is linked to Asn347. MIR domains follow at residues 359 to 418 and 432 to 488; these read LIPV…VLLI and DKYI…IDSV. Residues 483–503 form a helical membrane-spanning segment; that stretch reads FLIDSVQLPVDFQVPMIEYYI. The Cytoplasmic portion of the chain corresponds to 504-565; sequence GKISSSAEFN…KWPITLDTDS (62 aa). Residues 566–586 traverse the membrane as a helical segment; the sequence is PVWFNFAWYGSLLSMIIFMCV. Over 587–617 the chain is Lumenal; sequence QCKRMISWNPWTTAEPSFSIKWEVYNEFGWE. Residues 618 to 638 form a helical membrane-spanning segment; it reads CIVGWFLHFYIFTMSPHFNLG. Over 639–662 the chain is Cytoplasmic; that stretch reads KKLYFQSFFFSVLCLLESLDCLAK.

Belongs to the glycosyltransferase 39 family.

The protein localises to the endoplasmic reticulum membrane. It carries out the reaction a di-trans,poly-cis-dolichyl beta-D-mannosyl phosphate + L-seryl-[protein] = 3-O-(alpha-D-mannosyl)-L-seryl-[protein] + a di-trans,poly-cis-dolichyl phosphate + H(+). The enzyme catalyses a di-trans,poly-cis-dolichyl beta-D-mannosyl phosphate + L-threonyl-[protein] = 3-O-(alpha-D-mannosyl)-L-threonyl-[protein] + a di-trans,poly-cis-dolichyl phosphate + H(+). Its pathway is protein modification; protein glycosylation. Probable protein O-mannosyltransferase involved in O-glycosylation which is essential for cell wall rigidity. Transfers mannose from Dol-P-mannose to Ser or Thr residues on proteins. This chain is Probable dolichyl-phosphate-mannose--protein mannosyltransferase 7, found in Saccharomyces cerevisiae (strain ATCC 204508 / S288c) (Baker's yeast).